The sequence spans 87 residues: Translation initiation factor IF-1 2 (87 aa).

One can recognise an S1-like domain in the interval 1–72 (MAKEEVIEME…TKGRINFRHK (72 aa)).

It belongs to the IF-1 family. Component of the 30S ribosomal translation pre-initiation complex which assembles on the 30S ribosome in the order IF-2 and IF-3, IF-1 and N-formylmethionyl-tRNA(fMet); mRNA recruitment can occur at any time during PIC assembly.

The protein localises to the cytoplasm. In terms of biological role, one of the essential components for the initiation of protein synthesis. Stabilizes the binding of IF-2 and IF-3 on the 30S subunit to which N-formylmethionyl-tRNA(fMet) subsequently binds. Helps modulate mRNA selection, yielding the 30S pre-initiation complex (PIC). Upon addition of the 50S ribosomal subunit IF-1, IF-2 and IF-3 are released leaving the mature 70S translation initiation complex. The protein is Translation initiation factor IF-1 2 of Thiobacillus denitrificans (strain ATCC 25259 / T1).